Consider the following 500-residue polypeptide: Glycerol kinase (500 aa).

Residue Thr12 coordinates ADP. Positions 12, 13, and 14 each coordinate ATP. Thr12 contacts sn-glycerol 3-phosphate. Arg16 serves as a coordination point for ADP. Sn-glycerol 3-phosphate is bound by residues Arg82, Glu83, Tyr135, and Asp245. Positions 82, 83, 135, 245, and 246 each coordinate glycerol. Positions 267 and 310 each coordinate ADP. Residues Thr267, Gly310, Gln314, and Gly411 each coordinate ATP. ADP-binding residues include Gly411 and Asn415.

Belongs to the FGGY kinase family. Homotetramer and homodimer (in equilibrium).

The enzyme catalyses glycerol + ATP = sn-glycerol 3-phosphate + ADP + H(+). The protein operates within polyol metabolism; glycerol degradation via glycerol kinase pathway; sn-glycerol 3-phosphate from glycerol: step 1/1. With respect to regulation, activated by phosphorylation and inhibited by fructose 1,6-bisphosphate (FBP). Functionally, key enzyme in the regulation of glycerol uptake and metabolism. Catalyzes the phosphorylation of glycerol to yield sn-glycerol 3-phosphate. This chain is Glycerol kinase, found in Clostridium perfringens (strain 13 / Type A).